The primary structure comprises 150 residues: Deoxyuridine 5'-triphosphate nucleotidohydrolase (150 aa).

Substrate is bound by residues 67–69, asparagine 80, and 84–86; these read RSS and VID.

It belongs to the dUTPase family. The cofactor is Mg(2+).

The catalysed reaction is dUTP + H2O = dUMP + diphosphate + H(+). It participates in pyrimidine metabolism; dUMP biosynthesis; dUMP from dCTP (dUTP route): step 2/2. In terms of biological role, this enzyme is involved in nucleotide metabolism: it produces dUMP, the immediate precursor of thymidine nucleotides and it decreases the intracellular concentration of dUTP so that uracil cannot be incorporated into DNA. In Lactococcus lactis subsp. lactis (strain IL1403) (Streptococcus lactis), this protein is Deoxyuridine 5'-triphosphate nucleotidohydrolase (dut).